The sequence spans 410 residues: Translation initiation factor 2 subunit gamma (410 aa).

Residues 9–202 enclose the tr-type G domain; sequence QAEVNIGMVG…AIEEFIPTPE (194 aa). The interval 18–25 is G1; the sequence is GHVDHGKT. The Mg(2+) site is built by Asp-21, Thr-25, Gly-46, and Thr-48. A GTP-binding site is contributed by 21-26; it reads DHGKTT. The interval 46 to 50 is G2; it reads GITIK. Zn(2+) is bound by residues Cys-61, Cys-64, Cys-73, and Cys-76. Residues 90-93 are G3; sequence DAPG. Residues 145 to 148 and 180 to 182 contribute to the GTP site; these read NKIE and SAL. The G4 stretch occupies residues 145–148; that stretch reads NKIE. The tract at residues 180 to 182 is G5; the sequence is SAL.

It belongs to the TRAFAC class translation factor GTPase superfamily. Classic translation factor GTPase family. EIF2G subfamily. Heterotrimer composed of an alpha, a beta and a gamma chain. The cofactor is Mg(2+).

It carries out the reaction GTP + H2O = GDP + phosphate + H(+). Functionally, eIF-2 functions in the early steps of protein synthesis by forming a ternary complex with GTP and initiator tRNA. The protein is Translation initiation factor 2 subunit gamma of Thermococcus onnurineus (strain NA1).